A 183-amino-acid chain; its full sequence is MKGGKRVQPARPNRINREIRAQEVRLTGVDGEQIGIVSLNEALEKAEEAGVDLVEISPNAEPPVCRIMDYGKFLYEKSKSTKEQKEEQKVIQVKEIKFRPGTDDGDYQVKLRNLIRFLEDGDKAKITLRFRGPEMAHQQIGMEVLNPLRKDLCEDMDLAVVESFPTKIEGRQMIMVLAPKKKQ.

This sequence belongs to the IF-3 family. In terms of assembly, monomer.

The protein resides in the cytoplasm. In terms of biological role, IF-3 binds to the 30S ribosomal subunit and shifts the equilibrium between 70S ribosomes and their 50S and 30S subunits in favor of the free subunits, thus enhancing the availability of 30S subunits on which protein synthesis initiation begins. The protein is Translation initiation factor IF-3 of Serratia marcescens.